We begin with the raw amino-acid sequence, 436 residues long: MSDRQQVTNARGERIAIVSGLRTPFAKQATAFHGVSALDMGKMVVNELLSRSELDPKLVEQLVYGQVVQMPAAPNIAREIVLGTGMNVATDAYSVTRACATSFQSTVNIAESIMTGNIEIGIAGGADSSSVLPIGVSKKLAHALVDLTKARTFGQKLAIFRRLGIKDLLPVPPAVAEYSTGLSMGQTAEQMAKTHGISRADQDAMAHRSHTLAAQTWASGVMKNEVMVAHVPPYNQFIEKDNNIRESSDLASYAKLRPVFDRKHGSVTAANSTPLTDGASALLLMSEGRAKALGYTPIGYIKSYAFAAIDVWEDMLMGPSYATPMALKRAGMQLEDLTLIEMHEAFAAQALANMKMFASKKFAEEKLGQNRAIGEIDMSKFNVLGGSLAYGHPFAATGARLITQMCNELKRRGGGVGLTTACAAGGLGAAMILEVE.

The Acyl-thioester intermediate role is filled by cysteine 99. Catalysis depends on proton acceptor residues histidine 392 and cysteine 422.

The protein belongs to the thiolase-like superfamily. Thiolase family. Heterotetramer of two alpha chains (FadJ) and two beta chains (FadI).

It localises to the cytoplasm. It carries out the reaction an acyl-CoA + acetyl-CoA = a 3-oxoacyl-CoA + CoA. Its pathway is lipid metabolism; fatty acid beta-oxidation. Catalyzes the final step of fatty acid oxidation in which acetyl-CoA is released and the CoA ester of a fatty acid two carbons shorter is formed. The chain is 3-ketoacyl-CoA thiolase from Shewanella amazonensis (strain ATCC BAA-1098 / SB2B).